A 601-amino-acid chain; its full sequence is Probable translation initiation factor IF-2 (601 aa).

Residues 10 to 227 enclose the tr-type G domain; it reads LRAPIVVVLG…VLAGLAQRYL (218 aa). Residues 19 to 26 form a G1 region; it reads GHVDAGKT. GTP is bound at residue 19–26; it reads GHVDAGKT. The interval 44–48 is G2; it reads TMTQH. Residues 83 to 86 are G3; it reads DTPG. GTP is bound by residues 83 to 87 and 137 to 140; these read DTPGH and NKID. Residues 137–140 are G4; it reads NKID. A G5 region spans residues 205–207; it reads SAV.

Belongs to the TRAFAC class translation factor GTPase superfamily. Classic translation factor GTPase family. IF-2 subfamily.

In terms of biological role, function in general translation initiation by promoting the binding of the formylmethionine-tRNA to ribosomes. Seems to function along with eIF-2. In Thermofilum pendens (strain DSM 2475 / Hrk 5), this protein is Probable translation initiation factor IF-2.